The primary structure comprises 265 residues: Hydroxyethylthiazole kinase (265 aa).

Methionine 50 is a substrate binding site. ATP contacts are provided by arginine 125 and threonine 171. Glycine 198 provides a ligand contact to substrate.

Belongs to the Thz kinase family. Mg(2+) is required as a cofactor.

It catalyses the reaction 5-(2-hydroxyethyl)-4-methylthiazole + ATP = 4-methyl-5-(2-phosphooxyethyl)-thiazole + ADP + H(+). Its pathway is cofactor biosynthesis; thiamine diphosphate biosynthesis; 4-methyl-5-(2-phosphoethyl)-thiazole from 5-(2-hydroxyethyl)-4-methylthiazole: step 1/1. Catalyzes the phosphorylation of the hydroxyl group of 4-methyl-5-beta-hydroxyethylthiazole (THZ). This chain is Hydroxyethylthiazole kinase, found in Salmonella typhimurium (strain LT2 / SGSC1412 / ATCC 700720).